The chain runs to 479 residues: U3 snoRNP-associated protein-like EMB2271 (479 aa).

Residues 1–73 are disordered; the sequence is MKLEKKKGIG…AHETVGEKRK (73 aa). Over residues 8 to 17 the composition is skewed to basic residues; the sequence is GIGAKRRGKK. The span at 18–38 shows a compositional bias: basic and acidic residues; that stretch reads SSIDHDPFLEEETEKRRKFNY. Residues 39–51 are compositionally biased toward acidic residues; that stretch reads DDDDDIESVESEE. Positions 52–73 are enriched in basic and acidic residues; sequence EGKVGEEVEDEFAHETVGEKRK. WD repeat units follow at residues 143 to 182, 204 to 243, 246 to 285, 288 to 326, 328 to 366, 386 to 425, and 431 to 471; these read KHQHSVTGVALSDDDSRGFSVSKDGTILHWDVSSGKSDEY, RHNKQSLALAVSSDGRYLATGGVDCHVHLWDIRTREHVQA, GHCGIVSSLCFREGTAELFSGSYDGTLSIWNAEHRTYIES, GHQSELLSIDALGRERVLSVGRDRTMQLYKVPESTRLIY, ASESNFECCCFVNSDEFLSGSDNGSIALWSILKKKPVFI, PACSWVSSVAVCRGSELAASGAGNGCVRLWGVESGSSAIQ, and PLPG…QNGV.

The protein belongs to the WD repeat RRP9 family.

It is found in the nucleus. The protein resides in the nucleolus. In terms of biological role, component of a nucleolar small nuclear ribonucleoprotein particle (snoRNP) thought to participate in the processing and modification of pre-ribosomal RNA. Essential for embryogenesis. May function during late embryogenesis. The sequence is that of U3 snoRNP-associated protein-like EMB2271 from Arabidopsis thaliana (Mouse-ear cress).